Here is a 140-residue protein sequence, read N- to C-terminus: Putative pre-16S rRNA nuclease (140 aa).

It belongs to the YqgF nuclease family.

It is found in the cytoplasm. Functionally, could be a nuclease involved in processing of the 5'-end of pre-16S rRNA. This chain is Putative pre-16S rRNA nuclease, found in Mycoplasma pneumoniae (strain ATCC 29342 / M129 / Subtype 1) (Mycoplasmoides pneumoniae).